Here is a 447-residue protein sequence, read N- to C-terminus: Ribulose bisphosphate carboxylase large chain (447 aa).

The substrate site is built by asparagine 89 and threonine 139. The active-site Proton acceptor is lysine 141. Lysine 143 provides a ligand contact to substrate. Residues lysine 167, aspartate 169, and glutamate 170 each contribute to the Mg(2+) site. The residue at position 167 (lysine 167) is an N6-carboxylysine. Histidine 260 serves as the catalytic Proton acceptor. Substrate is bound by residues arginine 261, histidine 293, and serine 345.

It belongs to the RuBisCO large chain family. Type I subfamily. Heterohexadecamer of 8 large chains and 8 small chains; disulfide-linked. The disulfide link is formed within the large subunit homodimers. Requires Mg(2+) as cofactor. In terms of processing, the disulfide bond which can form in the large chain dimeric partners within the hexadecamer appears to be associated with oxidative stress and protein turnover.

It localises to the plastid. The protein resides in the chloroplast. It catalyses the reaction 2 (2R)-3-phosphoglycerate + 2 H(+) = D-ribulose 1,5-bisphosphate + CO2 + H2O. The enzyme catalyses D-ribulose 1,5-bisphosphate + O2 = 2-phosphoglycolate + (2R)-3-phosphoglycerate + 2 H(+). Functionally, ruBisCO catalyzes two reactions: the carboxylation of D-ribulose 1,5-bisphosphate, the primary event in carbon dioxide fixation, as well as the oxidative fragmentation of the pentose substrate in the photorespiration process. Both reactions occur simultaneously and in competition at the same active site. The chain is Ribulose bisphosphate carboxylase large chain from Convolvulus tricolor (Dwarf morning glory).